A 344-amino-acid polypeptide reads, in one-letter code: GDSL esterase/lipase At2g19010 (344 aa).

Positions M1 to G21 are cleaved as a signal peptide. S33 serves as the catalytic Nucleophile. A glycan (N-linked (GlcNAc...) asparagine) is linked at N303. Active-site residues include D311 and H314.

It belongs to the 'GDSL' lipolytic enzyme family.

The protein resides in the secreted. The protein is GDSL esterase/lipase At2g19010 of Arabidopsis thaliana (Mouse-ear cress).